A 355-amino-acid chain; its full sequence is Guanine nucleotide-binding protein G(i) subunit alpha-2 (355 aa).

Glycine 2 is lipidated: N-myristoyl glycine. Cysteine 3 is lipidated: S-palmitoyl cysteine. The G-alpha domain occupies 32–355 (REVKLLLLGA…KNNLKDCGLF (324 aa)). Residues 35 to 48 (KLLLLGAGESGKST) are G1 motif. Residues 40 to 47 (GAGESGKS), 176 to 182 (LRTRVKT), 201 to 205 (DVGGQ), 270 to 273 (NKKD), and alanine 327 contribute to the GTP site. Residues serine 47 and threonine 182 each contribute to the Mg(2+) site. Positions 174–182 (DVLRTRVKT) are G2 motif. The segment at 197-206 (FKMFDVGGQR) is G3 motif. Positions 266–273 (ILFLNKKD) are G4 motif. Residues 325–330 (TCATDT) form a G5 motif region.

It belongs to the G-alpha family. G(i/o/t/z) subfamily. As to quaternary structure, g proteins are composed of 3 units; alpha, beta and gamma. The alpha chain contains the guanine nucleotide binding site. In this context, interacts with GNB2. Interacts with UNC5B. Interacts with GPSM1. Interacts with RGS12 and RGS14. Interacts (inactive GDP-bound form) with NUCB1 (via GBA motif); the interaction leads to activation of GNAI3. Interacts (inactive GDP-bound form) with CCDC88C/DAPLE (via GBA motif). Interacts (inactive GDP-bound form) with CCDC8A/GIV (via GBA motif).

It is found in the cytoplasm. The protein resides in the cell membrane. The protein localises to the cytoskeleton. Its subcellular location is the microtubule organizing center. It localises to the centrosome. It is found in the membrane. Its function is as follows. Guanine nucleotide-binding proteins (G proteins) are involved as modulators or transducers in various transmembrane signaling systems. The G(i) proteins are involved in hormonal regulation of adenylate cyclase: they inhibit the cyclase in response to beta-adrenergic stimuli. May play a role in cell division. In Rattus norvegicus (Rat), this protein is Guanine nucleotide-binding protein G(i) subunit alpha-2 (Gnai2).